Reading from the N-terminus, the 104-residue chain is MYVYDIPNCNEFISMYGCDCEIEEFIQTCFFHNKDKTMKLNLSFDRTINSLRIIIYHGNKICFDLYKENLKSILLDENGNFISFFLECMQIELSIYPEFSVFIR.

This is an uncharacterized protein from Pasteurella multocida (strain Pm70).